The sequence spans 1107 residues: Protein translocase subunit SecA (1107 aa).

Residues Q169, 187 to 191, and D688 contribute to the ATP site; that span reads GEGKT. Residues 1036–1066 show a composition bias toward basic and acidic residues; that stretch reads RHAAEQRTDMSKYRTQKDDIEAQQKAQRDAA. The segment at 1036-1107 is disordered; that stretch reads RHAAEQRTDM…KFKQCHGRNL (72 aa). Positions 1091, 1093, 1102, and 1103 each coordinate Zn(2+). The segment covering 1097-1107 has biased composition (basic residues); it reads KKFKQCHGRNL.

This sequence belongs to the SecA family. In terms of assembly, monomer and homodimer. Part of the essential Sec protein translocation apparatus which comprises SecA, SecYEG and auxiliary proteins SecDF. Other proteins may also be involved. Requires Zn(2+) as cofactor.

It is found in the cell inner membrane. It localises to the cytoplasm. The catalysed reaction is ATP + H2O + cellular proteinSide 1 = ADP + phosphate + cellular proteinSide 2.. Its function is as follows. Part of the Sec protein translocase complex. Interacts with the SecYEG preprotein conducting channel. Has a central role in coupling the hydrolysis of ATP to the transfer of proteins into and across the cell membrane, serving as an ATP-driven molecular motor driving the stepwise translocation of polypeptide chains across the membrane. The protein is Protein translocase subunit SecA of Porphyromonas gingivalis (strain ATCC BAA-308 / W83).